The primary structure comprises 312 residues: Type II methyltransferase M.NgoMIV (312 aa).

Residues 3-311 (FTSLEICAGA…RQIIKALKKE (309 aa)) enclose the SAM-dependent MTase C5-type domain. The active site involves Cys-74.

It belongs to the class I-like SAM-binding methyltransferase superfamily. C5-methyltransferase family.

It catalyses the reaction a 2'-deoxycytidine in DNA + S-adenosyl-L-methionine = a 5-methyl-2'-deoxycytidine in DNA + S-adenosyl-L-homocysteine + H(+). A methylase, recognizes the double-stranded sequence 5'-GCCGGC-3', methylates C-2 on both strands, and protects the DNA from cleavage by the NgoMIV endonuclease. The sequence is that of Type II methyltransferase M.NgoMIV (ngoMIVM) from Neisseria gonorrhoeae.